Here is a 393-residue protein sequence, read N- to C-terminus: Probable galacturonosyltransferase-like 8 (393 aa).

Topologically, residues 1–4 (MSSR) are cytoplasmic. A helical; Signal-anchor for type II membrane protein transmembrane segment spans residues 5–25 (FSLTVVCLIALLPFVVGIRLI). Topologically, residues 26-393 (PARITSVGDG…SELTDDSSFL (368 aa)) are lumenal. A glycan (N-linked (GlcNAc...) asparagine) is linked at Asn226.

It belongs to the glycosyltransferase 8 family.

Its subcellular location is the golgi apparatus membrane. Its pathway is glycan metabolism; pectin biosynthesis. Functionally, may be involved in pectin and/or xylans biosynthesis in cell walls. The protein is Probable galacturonosyltransferase-like 8 (GATL8) of Arabidopsis thaliana (Mouse-ear cress).